Here is a 229-residue protein sequence, read N- to C-terminus: Aldehyde oxidoreductase iron-sulfur-binding subunit PaoA (229 aa).

The disordered stretch occupies residues 1–21; sequence MSNQGEYPEDNRVGKHEPHDL. Positions 1 to 53 form a signal peptide, tat-type signal; that stretch reads MSNQGEYPEDNRVGKHEPHDLSLTRRDLIKVSAATAATAVVYPHSTLAASVPA. The span at 9 to 21 shows a compositional bias: basic and acidic residues; that stretch reads EDNRVGKHEPHDL. A 2Fe-2S ferredoxin-type domain is found at 61 to 137; the sequence is MPLTLKVNGK…GAEITTIEGL (77 aa). C99, C104, G105, C107, C119, C158, C161, C208, and C210 together coordinate [2Fe-2S] cluster.

Heterotrimer composed of PaoA, PaoB and PaoC. It depends on [2Fe-2S] cluster as a cofactor. Exported by the Tat system. The position of the signal peptide cleavage has not been experimentally proven.

The protein resides in the periplasm. The catalysed reaction is an aldehyde + A + H2O = a carboxylate + AH2 + H(+). With respect to regulation, the complex requires PaoD for activity. In terms of biological role, oxidizes aldehydes to the corresponding carboxylic acids with a preference for aromatic aldehydes. It might play a role in the detoxification of aldehydes to avoid cell damage. The chain is Aldehyde oxidoreductase iron-sulfur-binding subunit PaoA from Escherichia coli (strain K12).